Here is a 499-residue protein sequence, read N- to C-terminus: Potassium voltage-gated channel subfamily A member 2 (499 aa).

Residues 1 to 27 (MTVATGDLTDGSVGFAGHPQDSYDPEP) are disordered. Residues 1–125 (MTVATGDLTD…YELGEEAMEI (125 aa)) form a tetramerization domain region. Over 1-160 (MTVATGDLTD…LLFEYPESSG (160 aa)) the chain is Cytoplasmic. Residues 161-182 (PARIIAIISVTVILISIVSFCL) traverse the membrane as a helical segment. Residues 183–221 (ETLPVFRDENEDMHGSGGNYYSYPNSTVRFQKSNTFTDP) are Extracellular-facing. N-linked (GlcNAc...) asparagine glycosylation is present at Asn207. The helical transmembrane segment at 222-243 (FFIVETLCIIWFSFEFLVRFLA) threads the bilayer. Cys244 carries the S-palmitoyl cysteine lipid modification. Over 244–254 (CPSKAVFFTNL) the chain is Cytoplasmic. Residues 255–275 (MNIIDIVAIIPYFITLGTELA) form a helical membrane-spanning segment. The Extracellular segment spans residues 276–289 (EKTEDGQQGQQAMS). The helical; Voltage-sensor transmembrane segment at 290–310 (LAILRVIRLVRVFRIFKLSRH) threads the bilayer. Residues 311 to 325 (SKGLQILGQTLNASM) lie on the Cytoplasmic side of the membrane. Residues 312-325 (KGLQILGQTLNASM) are S4-S5 linker. Residues 326-347 (RELGLLIFFLFIGVILFSSAVF) traverse the membrane as a helical segment. Over 348–361 (FAEADERDSQFPSI) the chain is Extracellular. The helical intramembrane region spans 362-373 (PDAFWWAVVSMT). Residues 374–379 (TVGYGD) carry the Selectivity filter motif. The stretch at 374-381 (TVGYGDMV) is an intramembrane region. The Extracellular portion of the chain corresponds to 382–388 (PTTIGGK). The helical transmembrane segment at 389–417 (IVGSLCAIAGVLTIALPVPVIVSNFNYFY) threads the bilayer. Residues 418-499 (HRETEGEEQA…VNITKMLTDV (82 aa)) are Cytoplasmic-facing. The PDZ-binding signature appears at 497-499 (TDV).

Belongs to the potassium channel family. A (Shaker) (TC 1.A.1.2) subfamily. Kv1.2/KCNA2 sub-subfamily. Homotetramer and heterotetramer with other family members. As to expression, detected in tadpole brain and spinal cord.

The protein localises to the cell membrane. It catalyses the reaction K(+)(in) = K(+)(out). Functionally, voltage-gated potassium channel that mediates transmembrane potassium transport in excitable membranes, primarily in the brain and central nervous system. Prevents aberrant action potential firing and regulates neuronal output. Forms tetrameric potassium-selective channels through which potassium ions pass in accordance with their electrochemical gradient. The channel alternates between opened and closed conformations in response to the voltage difference across the membrane. Can form functional homotetrameric channels and heterotetrameric channels with other family members; the channels characteristics depend critically on the types of channel-forming alpha subunits that are present. Channel properties are modulated by cytoplasmic beta subunits that regulate the subcellular location of the alpha subunits. In vivo, membranes probably contain a mixture of heteromeric potassium channel complexes, making it difficult to assign currents observed in intact tissues to any particular potassium channel family member. Homotetrameric KCNA2 forms a delayed-rectifier potassium channel that opens in response to membrane depolarization, followed by slow spontaneous channel closure. Regulates neuronal excitability and plays a role as pacemaker in the regulation of neuronal action potentials. KCNA2-containing channels play a presynaptic role and prevent hyperexcitability and aberrant action potential firing. Response to toxins that are selective for KCNA2-containing potassium channels suggests that in Purkinje cells, dendritic subthreshold KCNA2-containing potassium channels prevent random spontaneous calcium spikes, suppressing dendritic hyperexcitability without hindering the generation of somatic action potentials, and thereby play an important role in motor coordination. Plays a role in the induction of long-term potentiation of neuron excitability in the CA3 layer of the hippocampus. This is Potassium voltage-gated channel subfamily A member 2 (kcna2) from Xenopus laevis (African clawed frog).